Consider the following 968-residue polypeptide: Probable transport protein MmpL2 (968 aa).

Helical transmembrane passes span 22-42 (FAVVIVLLWLGFTAFVNLAVP), 204-224 (VIAAMLLVIYRSVITAVLVLI), 245-265 (IFSLSTFATNLLVLMAIAAST), 297-317 (AHVILGSGLTIAGAMYCLSFA), 328-348 (PIAIGMLVAVLAALTLGPAVL), 378-398 (WPGPVLAATCLVASIGLLALP), 763-783 (YDLLIAGVAAISLILIIMMII), 787-807 (VVAAVVIVGTVVLSMGASFGL), 815-835 (ILGIELYWMVLAMSVILLLAV), 866-886 (TGGVVTAAGMVFAVTMSLFVF), and 890-910 (RIIGQIGTTIGLGLLFDTLVV).

This sequence belongs to the resistance-nodulation-cell division (RND) (TC 2.A.6) family. MmpL subfamily.

The protein resides in the cell membrane. This Mycobacterium tuberculosis (strain CDC 1551 / Oshkosh) protein is Probable transport protein MmpL2 (mmpL2).